A 352-amino-acid chain; its full sequence is tRNA N6-adenosine threonylcarbamoyltransferase (352 aa).

Positions 109 and 113 each coordinate Fe cation. Substrate-binding positions include 136–140, D169, G182, D186, and N284; that span reads TVSGG. D312 contacts Fe cation.

Belongs to the KAE1 / TsaD family. Fe(2+) serves as cofactor.

The protein resides in the cytoplasm. The catalysed reaction is L-threonylcarbamoyladenylate + adenosine(37) in tRNA = N(6)-L-threonylcarbamoyladenosine(37) in tRNA + AMP + H(+). Required for the formation of a threonylcarbamoyl group on adenosine at position 37 (t(6)A37) in tRNAs that read codons beginning with adenine. Is involved in the transfer of the threonylcarbamoyl moiety of threonylcarbamoyl-AMP (TC-AMP) to the N6 group of A37, together with TsaE and TsaB. TsaD likely plays a direct catalytic role in this reaction. This is tRNA N6-adenosine threonylcarbamoyltransferase from Chloroherpeton thalassium (strain ATCC 35110 / GB-78).